The chain runs to 237 residues: MELTWHGHSTWHVNVDGTTFLIDPFFSNPHTERKPTDIKKPDYVLLTHAHADHIGDADVFTDTTVVGVPEMTGYMESEVGFTESIGMNIGGTVECGDAYVTMHRADHTNGLETDYEYSIGVPTGYIISDNKPTRTADTDSTSFYHAGDTGLMSEMKDVIGTYLEPDAAALPTGDHFTMGPTQAAIAAEWLDVDHVFPMHYDTFGPIEIDINELVEEVGSGDTDATVHVLDGDETFIL.

Belongs to the UPF0173 family.

The chain is UPF0173 metal-dependent hydrolase HQ_3368A from Haloquadratum walsbyi (strain DSM 16790 / HBSQ001).